A 902-amino-acid chain; its full sequence is Protein translocase subunit SecA (902 aa).

ATP-binding positions include Gln-85, 103–107 (GEGKT), and Asp-492. A disordered region spans residues 846–902 (LSYSGGGEEPNQRPKSPRRRSERKIGPNEPCPCGSGKKFKKCHGRVGAPPLPTSQSQ). 4 residues coordinate Zn(2+): Cys-876, Cys-878, Cys-887, and His-888.

This sequence belongs to the SecA family. As to quaternary structure, monomer and homodimer. Part of the essential Sec protein translocation apparatus which comprises SecA, SecYEG and auxiliary proteins SecDF. Other proteins may also be involved. Zn(2+) is required as a cofactor.

It localises to the cell membrane. The protein localises to the cytoplasm. It catalyses the reaction ATP + H2O + cellular proteinSide 1 = ADP + phosphate + cellular proteinSide 2.. Its function is as follows. Part of the Sec protein translocase complex. Interacts with the SecYEG preprotein conducting channel. Has a central role in coupling the hydrolysis of ATP to the transfer of proteins into and across the cell membrane, serving as an ATP-driven molecular motor driving the stepwise translocation of polypeptide chains across the membrane. This chain is Protein translocase subunit SecA, found in Rubrobacter xylanophilus (strain DSM 9941 / JCM 11954 / NBRC 16129 / PRD-1).